Reading from the N-terminus, the 145-residue chain is Phospholipase A2, membrane associated (145 aa).

The signal sequence occupies residues 1–20 (MKLLLLLLVVMASDLPQAHG). 7 disulfide bridges follow: cysteine 46/cysteine 138, cysteine 48/cysteine 64, cysteine 63/cysteine 118, cysteine 69/cysteine 145, cysteine 70/cysteine 111, cysteine 79/cysteine 104, and cysteine 97/cysteine 109. Ca(2+)-binding residues include histidine 47, glycine 49, and glycine 51. The active site involves histidine 67. Aspartate 68 serves as a coordination point for Ca(2+). Aspartate 112 is an active-site residue.

It belongs to the phospholipase A2 family. The cofactor is Ca(2+). As to expression, alveolar macrophages, and at much lower levels in peripheral blood monocytes and peritoneal macrophages.

Its subcellular location is the secreted. The protein resides in the cell membrane. It is found in the mitochondrion outer membrane. It carries out the reaction a 1,2-diacyl-sn-glycero-3-phosphoethanolamine + H2O = a 1-acyl-sn-glycero-3-phosphoethanolamine + a fatty acid + H(+). The catalysed reaction is 1-hexadecanoyl-2-(9Z-octadecenoyl)-sn-glycero-3-phosphoethanolamine + H2O = 1-hexadecanoyl-sn-glycero-3-phosphoethanolamine + (9Z)-octadecenoate + H(+). The enzyme catalyses 1-hexadecanoyl-2-(9Z,12Z-octadecadienoyl)-sn-glycero-3-phosphoethanolamine + H2O = 1-hexadecanoyl-sn-glycero-3-phosphoethanolamine + (9Z,12Z)-octadecadienoate + H(+). It catalyses the reaction 1-hexadecanoyl-2-(5Z,8Z,11Z,14Z-eicosatetraenoyl)-sn-glycero-3-phosphoethanolamine + H2O = 1-hexadecanoyl-sn-glycero-3-phosphoethanolamine + (5Z,8Z,11Z,14Z)-eicosatetraenoate + H(+). It carries out the reaction N-hexadecanoyl-1,2-di-(9Z-octadecenoyl)-sn-glycero-3-phosphoethanolamine + H2O = N-hexadecanoyl-1-(9Z-octadecenoyl)-sn-glycero-3-phosphoethanolamine + (9Z)-octadecenoate + H(+). The catalysed reaction is 1,2-dihexadecanoyl-sn-glycero-3-phospho-(1'-sn-glycerol) + H2O = 1-hexadecanoyl-sn-glycero-3-phospho-(1'-sn-glycerol) + hexadecanoate + H(+). The enzyme catalyses 1-hexadecanoyl-2-(9Z-octadecenoyl)-sn-glycero-3-phosphoglycerol + H2O = 1-hexadecanoyl-sn-glycero-3-phosphoglycerol + (9Z)-octadecenoate + H(+). It catalyses the reaction 1-hexadecanoyl-2-(9Z-octadecenoyl)-sn-glycero-3-phospho-(1'-sn-glycerol) + H2O = 1-hexadecanoyl-sn-glycero-3-phospho-(1'-sn-glycerol) + (9Z)-octadecenoate + H(+). It carries out the reaction a 1,2-diacyl-sn-glycero-3-phosphocholine + H2O = a 1-acyl-sn-glycero-3-phosphocholine + a fatty acid + H(+). The catalysed reaction is 1,2-dihexadecanoyl-sn-glycero-3-phosphocholine + H2O = 1-hexadecanoyl-sn-glycero-3-phosphocholine + hexadecanoate + H(+). The enzyme catalyses 1-hexadecanoyl-2-(9Z-octadecenoyl)-sn-glycero-3-phosphocholine + H2O = 1-hexadecanoyl-sn-glycero-3-phosphocholine + (9Z)-octadecenoate + H(+). It catalyses the reaction 1-hexadecanoyl-2-(9Z,12Z-octadecadienoyl)-sn-glycero-3-phosphocholine + H2O = (9Z,12Z)-octadecadienoate + 1-hexadecanoyl-sn-glycero-3-phosphocholine + H(+). It carries out the reaction 1-hexadecanoyl-2-(4Z,7Z,10Z,13Z,16Z,19Z-docosahexaenoyl)-sn-glycero-3-phosphocholine + H2O = (4Z,7Z,10Z,13Z,16Z,19Z)-docosahexaenoate + 1-hexadecanoyl-sn-glycero-3-phosphocholine + H(+). Secretory calcium-dependent phospholipase A2 that primarily targets extracellular phospholipids with implications in host antimicrobial defense, inflammatory response and tissue regeneration. Hydrolyzes the ester bond of the fatty acyl group attached at sn-2 position of phospholipids (phospholipase A2 activity) with preference for phosphatidylethanolamines and phosphatidylglycerols over phosphatidylcholines. Contributes to lipid remodeling of cellular membranes and generation of lipid mediators involved in pathogen clearance. Displays bactericidal activity against Gram-positive bacteria by directly hydrolyzing phospholipids of the bacterial membrane. Upon sterile inflammation, targets membrane phospholipids of extracellular mitochondria released from activated platelets, generating free unsaturated fatty acids such as arachidonate that is used by neighboring leukocytes to synthesize inflammatory eicosanoids such as leukotrienes. Simultaneously, by compromising mitochondrial membrane integrity, promotes the release in circulation of potent damage-associated molecular pattern molecules that activate the innate immune response. Plays a stem cell regulator role in the intestinal crypt. Within intracellular compartment mediates Paneth cell differentiation and its stem cell supporting functions by inhibiting Wnt signaling pathway in intestinal stem cell (ICS). Secreted in the intestinal lumen upon inflammation, acts in an autocrine way and promotes prostaglandin E2 synthesis that stimulates Wnt signaling pathway in ICS cells and tissue regeneration. May play a role in the biosynthesis of N-acyl ethanolamines that regulate energy metabolism and inflammation. Hydrolyzes N-acyl phosphatidylethanolamines to N-acyl lysophosphatidylethanolamines, which are further cleaved by a lysophospholipase D to release N-acyl ethanolamines. Independent of its catalytic activity, acts as a ligand for integrins. Binds to and activates integrins ITGAV:ITGB3, ITGA4:ITGB1 and ITGA5:ITGB1. Binds to a site (site 2) which is distinct from the classical ligand-binding site (site 1) and induces integrin conformational changes and enhanced ligand binding to site 1. Induces cell proliferation in an integrin-dependent manner. This chain is Phospholipase A2, membrane associated (PLA2G2A), found in Cavia porcellus (Guinea pig).